Here is an 89-residue protein sequence, read N- to C-terminus: Small ribosomal subunit protein uS15 (89 aa).

It belongs to the universal ribosomal protein uS15 family. As to quaternary structure, part of the 30S ribosomal subunit. Forms a bridge to the 50S subunit in the 70S ribosome, contacting the 23S rRNA.

Its function is as follows. One of the primary rRNA binding proteins, it binds directly to 16S rRNA where it helps nucleate assembly of the platform of the 30S subunit by binding and bridging several RNA helices of the 16S rRNA. Functionally, forms an intersubunit bridge (bridge B4) with the 23S rRNA of the 50S subunit in the ribosome. This Mycobacterium sp. (strain JLS) protein is Small ribosomal subunit protein uS15.